The chain runs to 225 residues: tRNA (guanine-N(1)-)-methyltransferase (225 aa).

S-adenosyl-L-methionine-binding positions include glycine 112 and 132 to 137 (IGDYVL).

The protein belongs to the RNA methyltransferase TrmD family. In terms of assembly, homodimer.

It localises to the cytoplasm. It carries out the reaction guanosine(37) in tRNA + S-adenosyl-L-methionine = N(1)-methylguanosine(37) in tRNA + S-adenosyl-L-homocysteine + H(+). Functionally, specifically methylates guanosine-37 in various tRNAs. The sequence is that of tRNA (guanine-N(1)-)-methyltransferase from Porphyromonas gingivalis (strain ATCC 33277 / DSM 20709 / CIP 103683 / JCM 12257 / NCTC 11834 / 2561).